Consider the following 518-residue polypeptide: Probable carboxypeptidase 2 (518 aa).

The signal sequence occupies residues 1-21 (MVAYHLLTLISLGLGSHCASA). N-linked (GlcNAc...) asparagine glycosylation occurs at asparagine 46. The disordered stretch occupies residues 53 to 76 (PAFTSPGTVPRGFSDGTSGPTRDE). One can recognise a Peptidase M14 domain in the interval 71-351 (GPTRDETMEG…VMAKSILQTA (281 aa)). An N-linked (GlcNAc...) asparagine glycan is attached at asparagine 116. Residues histidine 136, glutamate 139, and histidine 224 each coordinate Zn(2+). Catalysis depends on glutamate 322, which acts as the Proton donor/acceptor. Asparagine 393 and asparagine 459 each carry an N-linked (GlcNAc...) asparagine glycan.

Belongs to the peptidase M14 family. Zn(2+) serves as cofactor.

It is found in the secreted. Its function is as follows. Extracellular metalloprotease that contributes to pathogenicity. In Trichophyton verrucosum (strain HKI 0517), this protein is Probable carboxypeptidase 2 (MCPB).